A 112-amino-acid polypeptide reads, in one-letter code: Ig kappa chain V-III region TEPC 124 (112 aa).

Residues 1–23 are framework-1; it reads DIVLTQSPASLAVSLGQRATISC. A disulfide bond links C23 and C92. The tract at residues 24-38 is complementarity-determining-1; the sequence is RASZSVNWYGNSFMZ. Residues 39–53 are framework-2; the sequence is WYZZKPGZPPKLLIY. Positions 54-60 are complementarity-determining-2; sequence RASNLZS. The framework-3 stretch occupies residues 61 to 92; it reads GIPARFSGSGSRTBFTLTIBPVZABDVATYFC. A complementarity-determining-3 region spans residues 93–101; sequence ZZSBZAPWT. Residues 102–111 are framework-4; sequence FGSGTKLEIK.

The polypeptide is Ig kappa chain V-III region TEPC 124 (Mus musculus (Mouse)).